Reading from the N-terminus, the 601-residue chain is Putative Lon protease homolog (601 aa).

Residues 363 to 560 (GEIVGQINGL…YQACELLFGR (198 aa)) enclose the Lon proteolytic domain. Active-site residues include S455 and K498.

It belongs to the peptidase S16 family.

In Haemophilus influenzae (strain ATCC 51907 / DSM 11121 / KW20 / Rd), this protein is Putative Lon protease homolog.